The following is a 202-amino-acid chain: Small ribosomal subunit protein uS4c (202 aa).

The disordered stretch occupies residues 13-37 (RRPGVSPGLTSKTLKSKSNYIDRST). A compositionally biased stretch (polar residues) spans 20–37 (GLTSKTLKSKSNYIDRST). The region spanning 90 to 153 (MRLDNTIFRL…ESRSMISKNI (64 aa)) is the S4 RNA-binding domain.

Belongs to the universal ribosomal protein uS4 family. In terms of assembly, part of the 30S ribosomal subunit. Contacts protein S5. The interaction surface between S4 and S5 is involved in control of translational fidelity.

Its subcellular location is the plastid. The protein resides in the chloroplast. One of the primary rRNA binding proteins, it binds directly to 16S rRNA where it nucleates assembly of the body of the 30S subunit. Its function is as follows. With S5 and S12 plays an important role in translational accuracy. This chain is Small ribosomal subunit protein uS4c (rps4), found in Takakia lepidozioides (Moss).